A 256-amino-acid polypeptide reads, in one-letter code: DNA repair protein RecO (256 aa).

It belongs to the RecO family.

Involved in DNA repair and RecF pathway recombination. This is DNA repair protein RecO from Nocardia farcinica (strain IFM 10152).